We begin with the raw amino-acid sequence, 163 residues long: MSGLIQAAKSLLLLEFVSAFFLAMRQFFSPKPTINYPYEKGVVSQRFRGEHALRRYPNGEERCIACKLCEAICPAQAITIEAGPRGNDGTRRTVRYDIDMVKCIYCGFCQEACPVEAIVEGPNFEFATEMREELYYDKEKLLMNGDRWEREIARNILIDAPYR.

4Fe-4S ferredoxin-type domains follow at residues 53-83 and 94-123; these read LRRY…IEAG and VRYD…EGPN. The [4Fe-4S] cluster site is built by Cys-63, Cys-66, Cys-69, Cys-73, Cys-103, Cys-106, Cys-109, and Cys-113.

It belongs to the complex I 23 kDa subunit family. In terms of assembly, NDH-1 is composed of 14 different subunits. Subunits NuoA, H, J, K, L, M, N constitute the membrane sector of the complex. [4Fe-4S] cluster serves as cofactor.

It is found in the cell inner membrane. It carries out the reaction a quinone + NADH + 5 H(+)(in) = a quinol + NAD(+) + 4 H(+)(out). Its function is as follows. NDH-1 shuttles electrons from NADH, via FMN and iron-sulfur (Fe-S) centers, to quinones in the respiratory chain. The immediate electron acceptor for the enzyme in this species is believed to be ubiquinone. Couples the redox reaction to proton translocation (for every two electrons transferred, four hydrogen ions are translocated across the cytoplasmic membrane), and thus conserves the redox energy in a proton gradient. The polypeptide is NADH-quinone oxidoreductase subunit I (Bartonella quintana (strain Toulouse) (Rochalimaea quintana)).